The sequence spans 239 residues: Ribonuclease PH (239 aa).

Phosphate-binding positions include Arg86 and 124–126 (GTR).

This sequence belongs to the RNase PH family. In terms of assembly, homohexameric ring arranged as a trimer of dimers.

It carries out the reaction tRNA(n+1) + phosphate = tRNA(n) + a ribonucleoside 5'-diphosphate. In terms of biological role, phosphorolytic 3'-5' exoribonuclease that plays an important role in tRNA 3'-end maturation. Removes nucleotide residues following the 3'-CCA terminus of tRNAs; can also add nucleotides to the ends of RNA molecules by using nucleoside diphosphates as substrates, but this may not be physiologically important. Probably plays a role in initiation of 16S rRNA degradation (leading to ribosome degradation) during starvation. In Marinomonas sp. (strain MWYL1), this protein is Ribonuclease PH.